The sequence spans 628 residues: FAD-linked oxidoreductase easE (628 aa).

The first 20 residues, 1–20 (MSHRILCVAFCVCSLVAVSS), serve as a signal peptide directing secretion. The FAD-binding PCMH-type domain occupies 144 to 328 (HQGRIPLYSA…TRATMRVHLN (185 aa)). A Pros-8alpha-FAD histidine modification is found at His182. 3 N-linked (GlcNAc...) asparagine glycosylation sites follow: Asn343, Asn382, and Asn487.

This sequence belongs to the oxygen-dependent FAD-linked oxidoreductase family. FAD serves as cofactor.

The protein operates within alkaloid biosynthesis; ergot alkaloid biosynthesis. FAD binding oxidoreductase; part of the gene cluster that mediates the biosynthesis of fumiclavanine C, a fungal ergot alkaloid. DmaW catalyzes the first step of ergot alkaloid biosynthesis by condensing dimethylallyl diphosphate (DMAP) and tryptophan to form 4-dimethylallyl-L-tryptophan. The second step is catalyzed by the methyltransferase easF that methylates 4-dimethylallyl-L-tryptophan in the presence of S-adenosyl-L-methionine, resulting in the formation of 4-dimethylallyl-L-abrine. The catalase easC and the FAD-dependent oxidoreductase easE then transform 4-dimethylallyl-L-abrine to chanoclavine-I which is further oxidized by EasD in the presence of NAD(+), resulting in the formation of chanoclavine-I aldehyde. EasA reduces chanoclavine-I aldehyde to dihydrochanoclavine-I aldehyde that spontaneously dehydrates to form 6,8-dimethyl-6,7-didehydroergoline. EasG then catalyzes the reduction of 6,8-dimethyl-6,7-didehydroergoline to form festuclavine. Hydrolysis of festuclavine by easM then leads to the formation of fumigaclavine B which is in turn acetylated by easN to fumigaclavine A. Finally, easL catalyzes the conversion of fumigaclavine A into fumigaclavine C by attaching a dimethylallyl moiety to C-2 of the indole nucleus. This Aspergillus fumigatus (strain ATCC MYA-4609 / CBS 101355 / FGSC A1100 / Af293) (Neosartorya fumigata) protein is FAD-linked oxidoreductase easE.